We begin with the raw amino-acid sequence, 232 residues long: A-type ATP synthase subunit D (232 aa).

A disordered region spans residues 200–232 (KKIKNKKEAEEEDEDEDESEMTDETVVQTPADD). Acidic residues predominate over residues 209-222 (EEEDEDEDESEMTD).

This sequence belongs to the V-ATPase D subunit family. In terms of assembly, has multiple subunits with at least A(3), B(3), C, D, E, F, H, I and proteolipid K(x).

The protein resides in the cell membrane. Functionally, component of the A-type ATP synthase that produces ATP from ADP in the presence of a proton gradient across the membrane. The sequence is that of A-type ATP synthase subunit D from Haloquadratum walsbyi (strain DSM 16790 / HBSQ001).